The primary structure comprises 131 residues: MLTDPIADYLTRIRNANTAFHETTEVPASGIKKALTEILKEEGFIRGFEVVDDGKQGKIRIYLKYGKNKERVITGLKRISKPGLRVYAGKEEVPRVLGGLGIAILSTSKGIMTDKEARKEGIGGEVICYIW.

The protein belongs to the universal ribosomal protein uS8 family. In terms of assembly, part of the 30S ribosomal subunit. Contacts proteins S5 and S12.

One of the primary rRNA binding proteins, it binds directly to 16S rRNA central domain where it helps coordinate assembly of the platform of the 30S subunit. The sequence is that of Small ribosomal subunit protein uS8 from Desulforudis audaxviator (strain MP104C).